The chain runs to 1278 residues: Dynactin subunit 1 (1278 aa).

The tract at residues 1–25 (MAQSKRHVYSRTPSGSRMSAEASAR) is disordered. Residues 48 to 90 (GATLFATGKWVGVILDEAKGKNDGTVQGRKYFTCDEGHGIFVR) enclose the CAP-Gly domain. Residues 100 to 223 (GADTTSPETP…SKEEEGLRAQ (124 aa)) are disordered. The segment covering 102-114 (DTTSPETPDSSAS) has biased composition (polar residues). At Thr-108 the chain carries Phosphothreonine. Residues 129 to 152 (SKLRGLKPKKAPTARKTTTRRPKP) are compositionally biased toward basic residues. A phosphothreonine; by SLK mark is found at Thr-145, Thr-146, and Thr-147. Residues 161–184 (AGASSSLGPSGSASAGELSSSEPS) are compositionally biased toward low complexity. Phosphoserine; by PLK1 is present on Ser-179. Phosphoserine; by CDK1 is present on Ser-212. Coiled coils occupy residues 213–547 (PSKE…RQQQ), 943–1049 (LKLE…EGLR), and 1182–1211 (SAQL…KETV). The segment covering 214 to 223 (SKEEEGLRAQ) has biased composition (basic and acidic residues). The tract at residues 911–1278 (EYDAERPPSK…LHQLHSRLIS (368 aa)) is interaction with HPS6.

Belongs to the dynactin 150 kDa subunit family. In terms of assembly, monomer and homodimer. Subunit of dynactin, a multiprotein complex part of a tripartite complex with dynein and a adapter, such as BICDL1, BICD2 or HOOK3. The dynactin complex is built around ACTR1A/ACTB filament and consists of an actin-related filament composed of a shoulder domain, a pointed end and a barbed end. Its length is defined by its flexible shoulder domain. The soulder is composed of 2 DCTN1 subunits, 4 DCTN2 and 2 DCTN3. DCTN1/p150(glued) binds directly to microtubules and to cytoplasmic dynein. The 4 DCNT2 (via N-terminus) bind the ACTR1A filament and act as molecular rulers to determine the length. The pointed end is important for binding dynein-dynactin cargo adapters. Consists of 4 subunits: ACTR10, DCNT4, DCTN5 and DCTN6. The barbed end is composed of a CAPZA1:CAPZB heterodimers, which binds ACTR1A/ACTB filament and dynactin and stabilizes dynactin. Interacts with the C-terminus of MAPRE1, MAPRE2 and MAPRE3. Interacts (via C-terminus) with SNX6. Interacts with CLN3, DYNAP, ECPAS and FBXL5. Interacts with MISP; this interaction regulates its distribution at the cell cortex. Interacts with CEP131. Interacts with CEP126. Interacts with CLIP1. Interacts with dynein intermediate chain and dynein heavy chain. Interacts with PLK1 (via POLO-box domain). Interacts with TBCB. Binds preferentially to tyrosinated microtubules than to detyrosinated microtubules. Interacts with PARD6A. Interacts with HPS6. Interacts with KIF3A. Interacts with BICD2. Interacts with DST (isoform 9). Interacts with DST (isoform 1). Identified in a complex with MREG and RILP. Interacts with BCCIP (isoform 2/alpha). Interacts with DCDC1. Interacts with AKNA. Interacts with DYNC1I2. Interacts with RUFY3 and RUFY4. Ubiquitinated by a SCF complex containing FBXL5, leading to its degradation by the proteasome. In terms of processing, phosphorylation by SLK at Thr-145, Thr-146 and Thr-147 targets DCTN1 to the centrosome. It is uncertain if SLK phosphorylates all three threonines or one or two of them. PLK1-mediated phosphorylation at Ser-179 is essential for its localization in the nuclear envelope, promotes its dissociation from microtubules during early mitosis and positively regulates nuclear envelope breakdown during prophase. In terms of tissue distribution, brain.

It is found in the cytoplasm. It localises to the cytoskeleton. The protein localises to the microtubule organizing center. Its subcellular location is the centrosome. The protein resides in the centriole. It is found in the spindle. It localises to the nucleus envelope. The protein localises to the cell cortex. Its function is as follows. Part of the dynactin complex that activates the molecular motor dynein for ultra-processive transport along microtubules. Plays a key role in dynein-mediated retrograde transport of vesicles and organelles along microtubules by recruiting and tethering dynein to microtubules. Binds to both dynein and microtubules providing a link between specific cargos, microtubules and dynein. Essential for targeting dynein to microtubule plus ends, recruiting dynein to membranous cargos and enhancing dynein processivity (the ability to move along a microtubule for a long distance without falling off the track). Can also act as a brake to slow the dynein motor during motility along the microtubule. Can regulate microtubule stability by promoting microtubule formation, nucleation and polymerization and by inhibiting microtubule catastrophe in neurons. Inhibits microtubule catastrophe by binding both to microtubules and to tubulin, leading to enhanced microtubule stability along the axon. Plays a role in metaphase spindle orientation. Plays a role in centriole cohesion and subdistal appendage organization and function. Its recruitment to the centriole in a KIF3A-dependent manner is essential for the maintenance of centriole cohesion and the formation of subdistal appendage. Also required for microtubule anchoring at the mother centriole. Plays a role in primary cilia formation. The chain is Dynactin subunit 1 from Homo sapiens (Human).